We begin with the raw amino-acid sequence, 857 residues long: Blue light receptor lreA (857 aa).

PAS domains follow at residues isoleucine 306–asparagine 328, leucine 479–aspartate 542, and leucine 608–aspartate 642. The GATA-type zinc finger occupies cysteine 811 to cysteine 836.

Its function is as follows. Transcription factor that acts as a blue light sensor. Plays crucial roles in fungal growth and asexual development. Involved in conidiophore formation, sclerotium production, and conidial stress tolerance. Promotes conidiation by inducing the expression of brlA and abaA. Positively regulates the fungal pathogenicity towards maize. In blue light conditions, inhibits aflatoxin B1 (AFB1) biosynthesis by down-regulating the expression of key genes such as aflA, aflJ, aflH, aflO and aflK. In Aspergillus flavus, this protein is Blue light receptor lreA.